Consider the following 247-residue polypeptide: Probable dihydroorotate dehydrogenase B (NAD(+)), electron transfer subunit (247 aa).

The 87-residue stretch at 1–87 folds into the FAD-binding FR-type domain; the sequence is MLRRVMIKET…RGPYGNGFKS (87 aa). Positions 200, 205, 208, and 216 each coordinate [2Fe-2S] cluster.

Belongs to the PyrK family. Heterotetramer of 2 PyrK and 2 PyrD type B subunits. It depends on [2Fe-2S] cluster as a cofactor. FAD serves as cofactor.

Its pathway is pyrimidine metabolism; UMP biosynthesis via de novo pathway; orotate from (S)-dihydroorotate (NAD(+) route): step 1/1. Its function is as follows. Responsible for channeling the electrons from the oxidation of dihydroorotate from the FMN redox center in the PyrD type B subunit to the ultimate electron acceptor NAD(+). In Pyrococcus abyssi (strain GE5 / Orsay), this protein is Probable dihydroorotate dehydrogenase B (NAD(+)), electron transfer subunit.